The chain runs to 503 residues: Glutamate--tRNA ligase 1 (503 aa).

Residues 17–27 carry the 'HIGH' region motif; the sequence is PSPTGFLHIGN. The short motif at 261 to 265 is the 'KMSKS' region element; that stretch reads KLSKR. Lys264 provides a ligand contact to ATP.

This sequence belongs to the class-I aminoacyl-tRNA synthetase family. Glutamate--tRNA ligase type 1 subfamily. Monomer.

The protein localises to the cytoplasm. The catalysed reaction is tRNA(Glu) + L-glutamate + ATP = L-glutamyl-tRNA(Glu) + AMP + diphosphate. Its function is as follows. Catalyzes the attachment of glutamate to tRNA(Glu) in a two-step reaction: glutamate is first activated by ATP to form Glu-AMP and then transferred to the acceptor end of tRNA(Glu). The sequence is that of Glutamate--tRNA ligase 1 from Levilactobacillus brevis (strain ATCC 367 / BCRC 12310 / CIP 105137 / JCM 1170 / LMG 11437 / NCIMB 947 / NCTC 947) (Lactobacillus brevis).